A 1222-amino-acid polypeptide reads, in one-letter code: Protein SCP160 (1222 aa).

Residues M1–P12 are compositionally biased toward polar residues. The segment at M1–P59 is disordered. Positions S13–T38 are enriched in low complexity. Positions A39–P49 are enriched in basic and acidic residues. T50 bears the Phosphothreonine mark. 5 positions are modified to phosphoserine: S54, S63, S85, S87, and S89. Residues K79–G98 are disordered. One can recognise a KH 1 domain in the interval P177–I249. Position 630 is a phosphoserine (S630). 5 consecutive KH domains span residues K634–L702, I712–L771, G782–V851, F861–I929, and S939–I1001. S1112 carries the post-translational modification Phosphoserine. Residues Y1153–V1216 form the KH 7 domain.

The protein localises to the endoplasmic reticulum membrane. It is found in the nucleus membrane. Its function is as follows. Involved in the control of mitotic chromosome transmission. Required during cell division for faithful partitioning of the ER-nuclear envelope membranes which, in S.cerevisiae, enclose the duplicated chromosomes. This chain is Protein SCP160 (SCP160), found in Saccharomyces cerevisiae (strain ATCC 204508 / S288c) (Baker's yeast).